We begin with the raw amino-acid sequence, 480 residues long: Pre-glycoprotein polyprotein GP complex (480 aa).

Residue Gly-2 is the site of N-myristoyl glycine; by host attachment. Over Gly-2–Glu-17 the chain is Extracellular. Residues Ala-18–Lys-33 traverse the membrane as a helical segment. The Cytoplasmic segment spans residues Gly-34 to Ser-58. Residue Cys-57 coordinates Zn(2+). Residues Phe-59–Asp-419 are Extracellular-facing. Intrachain disulfides connect Cys-85/Cys-221, Cys-266/Cys-279, Cys-288/Cys-297, and Cys-351/Cys-372. N-linked (GlcNAc...) asparagine; by host glycans are attached at residues Asn-88, Asn-174, and Asn-214. Residues Asn-352, Asn-360, Asn-377, and Asn-382 are each glycosylated (N-linked (GlcNAc...) asparagine; by host). A helical transmembrane segment spans residues Leu-420–Pro-440. At Thr-441–His-480 the chain is on the cytoplasmic side. Zn(2+) is bound by residues His-442, His-444, Cys-450, His-454, Cys-462, Cys-464, and His-480.

Belongs to the arenaviridae GPC protein family. Interacts with glycoprotein G2. Part of the GP complex (GP-C) together with glycoprotein G1 and glycoprotein G2. The GP-complex interacts with protein Z, which interacts with ribonucleocapsid; these interactions may induce virion budding. As to quaternary structure, homotrimer; disulfide-linked. In pre-fusion state, G1 homotrimers bind G2 homotrimers via ionic interactions. Part of the GP complex (GP-C) together with glycoprotein G2 and the stable signal peptide. The GP-complex interacts with protein Z, which interacts with ribonucleocapsid; these interactions may induce virion budding. In terms of assembly, homotrimer. Interacts with the stable signal peptide. In pre-fusion state, G2 homotrimers bind G1 homotrimers via ionic interactions. Part of the GP complex (GP-C) together with glycoprotein G1 and the stable signal peptide. Acidification in the endosome triggers rearrangements, which ultimately leads to a 6 helix bundle formed by the two heptad repeat domains (HR1 and HR2) in post-fusion state. The GP-complex interacts with protein Z, which interacts with ribonucleocapsid; these interactions may induce virion budding. In terms of processing, specific enzymatic cleavages in vivo yield mature proteins. GP-C polyprotein is cleaved in the endoplasmic reticulum by the host protease MBTPS1. Only cleaved glycoprotein is incorporated into virions. The SSP remains stably associated with the GP complex following cleavage by signal peptidase and plays crucial roles in the trafficking of GP through the secretory pathway. Post-translationally, myristoylation is necessary for GP2-mediated fusion activity.

The protein resides in the virion membrane. It is found in the host endoplasmic reticulum membrane. It localises to the host Golgi apparatus membrane. The protein localises to the host cell membrane. Functions as a cleaved signal peptide that is retained as the third component of the GP complex (GP-C). Helps to stabilize the spike complex in its native conformation. The SSP is required for efficient glycoprotein expression, post-translational maturation cleavage of G1 and G2, glycoprotein transport to the cell surface plasma membrane, formation of infectious virus particles, and acid pH-dependent glycoprotein-mediated cell fusion. In terms of biological role, forms the virion spikes together with glycoprotein G2. The glycoprotein spike trimers are connected to the underlying matrix. Interacts with the host receptor leading to virus endocytosis. Functionally, forms the virion spikes together with glycoprotein G1. The glycoprotein spike trimers are connected to the underlying matrix. Class I viral fusion protein that directs fusion of viral and host endosomal membranes, leading to delivery of the nucleocapsid into the cytoplasm. Membrane fusion is mediated by irreversible conformational changes induced by acidification. In Cupixi mammarenavirus (isolate Rat/Brasil/BeAn 119303/1970) (CPXV), this protein is Pre-glycoprotein polyprotein GP complex.